We begin with the raw amino-acid sequence, 635 residues long: 1-deoxy-D-xylulose-5-phosphate synthase (635 aa).

Thiamine diphosphate contacts are provided by residues His77 and Gly118–Ala120. Asp149 contributes to the Mg(2+) binding site. Thiamine diphosphate-binding positions include Gly150–Ser151, Asn178, Phe290, and Glu375. Mg(2+) is bound at residue Asn178.

It belongs to the transketolase family. DXPS subfamily. In terms of assembly, homodimer. Requires Mg(2+) as cofactor. It depends on thiamine diphosphate as a cofactor.

It carries out the reaction D-glyceraldehyde 3-phosphate + pyruvate + H(+) = 1-deoxy-D-xylulose 5-phosphate + CO2. It participates in metabolic intermediate biosynthesis; 1-deoxy-D-xylulose 5-phosphate biosynthesis; 1-deoxy-D-xylulose 5-phosphate from D-glyceraldehyde 3-phosphate and pyruvate: step 1/1. Its function is as follows. Catalyzes the acyloin condensation reaction between C atoms 2 and 3 of pyruvate and glyceraldehyde 3-phosphate to yield 1-deoxy-D-xylulose-5-phosphate (DXP). This is 1-deoxy-D-xylulose-5-phosphate synthase from Chlorobium phaeovibrioides (strain DSM 265 / 1930) (Prosthecochloris vibrioformis (strain DSM 265)).